Consider the following 594-residue polypeptide: Aspartate--tRNA(Asp/Asn) ligase (594 aa).

An L-aspartate-binding site is contributed by Glu-175. The interval 199–202 is aspartate; the sequence is QLFK. Position 221 (Arg-221) interacts with L-aspartate. ATP is bound by residues 221-223 and Gln-230; that span reads RDE. His-446 is a binding site for L-aspartate. An ATP-binding site is contributed by Glu-492. Arg-499 contributes to the L-aspartate binding site. 544 to 547 is a binding site for ATP; the sequence is GFDR.

This sequence belongs to the class-II aminoacyl-tRNA synthetase family. Type 1 subfamily. In terms of assembly, homodimer.

It is found in the cytoplasm. The catalysed reaction is tRNA(Asx) + L-aspartate + ATP = L-aspartyl-tRNA(Asx) + AMP + diphosphate. In terms of biological role, aspartyl-tRNA synthetase with relaxed tRNA specificity since it is able to aspartylate not only its cognate tRNA(Asp) but also tRNA(Asn). Reaction proceeds in two steps: L-aspartate is first activated by ATP to form Asp-AMP and then transferred to the acceptor end of tRNA(Asp/Asn). This is Aspartate--tRNA(Asp/Asn) ligase from Hydrogenobaculum sp. (strain Y04AAS1).